We begin with the raw amino-acid sequence, 538 residues long: Pentatricopeptide repeat-containing protein At1g33350 (538 aa).

PPR repeat units follow at residues 87–123 (NTHLYAAVLTAYSSSLPLHASSAFSFFRLMVNRSVPR), 125–159 (NHFIYPLVLKSTPYLSSAFSTPLVHTHLFKSGFHL), 160–191 (YVVVQTALLHSYASSVSHITLARQLFDEMSER), 192–226 (NVVSWTAMLSGYARSGDISNAVALFEDMPERDVPS), 227–253 (WNAILAACTQNGLFLEAVSLFRRMINE), 259–293 (NEVTVVCVLSACAQTGTLQLAKGIHAFAYRRDLSS), 294–324 (DVFVSNSLVDLYGKCGNLEEASSVFKMASKK), 325–359 (SLTAWNSMINCFALHGRSEEAIAVFEEMMKLNIND), 363–398 (DHITFIGLLNACTHGGLVSKGRGYFDLMTNRFGIEP), and 399–433 (RIEHYGCLIDLLGRAGRFDEALEVMSTMKMKADEA). Residues 434-509 (IWGSLLNACK…PPGWSRIEID (76 aa)) are type E motif.

This sequence belongs to the PPR family. PCMP-E subfamily.

The polypeptide is Pentatricopeptide repeat-containing protein At1g33350 (PCMP-E57) (Arabidopsis thaliana (Mouse-ear cress)).